Here is a 527-residue protein sequence, read N- to C-terminus: MASGPHPTSTAAAASASSAAPSAGGSSSGTTTTTTTTTGGILIGDRLYSEVSLTIDHSVIPEERLSPTPSMQDGLDLPSETDLRILGCELIQAAGILLRLPQVAMATGQVLFHRFFYSKSFVKHSFEIVAMACINLASKIEEAPRRIRDVINVFHHLRQLRGKRTPSPLILDQNYINTKNQVIKAERRVLKELGFCVHVKHPHKIIVMYLQVLECERNQTLVQTAWNYMNDSLRTNVFVRFQPETIACACIYLAARALQIPLPTRPHWFLLFGTTEEEIQEICIETLRLYTRKKPNYELLEKEVEKRKVALQEAKLKAKGLNLDGTPALSTLGGFSPASKPSSPREVKAEEKSPVSINVKTVKKEPEDRQQASKSPYNGVRKDSKRSRNSRSASRSRSRTRSRSRSHTPRRHYNNRRSRSGTYSSRSRSRSRSHSESPRRHHNHGSPHLKAKHTREDLKSSNRHGHKRKKSRSRSQSKTRDHSDVTKKHRHERGHHRDRRERSRSFERSHKGKHHGGSRSGHGRHRR.

A disordered region spans residues 1–37 (MASGPHPTSTAAAASASSAAPSAGGSSSGTTTTTTTT). Cyclin-like stretches follow at residues 89-191 (ELIQ…RVLK) and 204-288 (KIIV…ETLR). Thr326 is modified (phosphothreonine). The segment at 327–527 (PALSTLGGFS…SRSGHGRHRR (201 aa)) is disordered. Phosphoserine is present on residues Ser336 and Ser339. Residues Lys340 and Lys348 each participate in a glycyl lysine isopeptide (Lys-Gly) (interchain with G-Cter in SUMO2) cross-link. Basic and acidic residues predominate over residues 343 to 353 (SPREVKAEEKS). Phosphoserine is present on residues Ser353 and Ser356. The span at 362-371 (VKKEPEDRQQ) shows a compositional bias: basic and acidic residues. Residue Lys363 forms a Glycyl lysine isopeptide (Lys-Gly) (interchain with G-Cter in SUMO2) linkage. Ser375 bears the Phosphoserine mark. 4 stretches are compositionally biased toward basic residues: residues 383–419 (DSKR…RRSR), 439–453 (RRHH…KAKH), 461–477 (SNRH…RSQS), and 487–499 (KKHR…HRDR). The segment at 391-433 (RSASRSRSRTRSRSRSHTPRRHYNNRRSRSGTYSSRSRSRSRS) is RS. Ser446 is modified (phosphoserine). Residues 500–509 (RERSRSFERS) show a composition bias toward basic and acidic residues. Basic residues predominate over residues 510–527 (HKGKHHGGSRSGHGRHRR).

Belongs to the cyclin family. Cyclin L subfamily. In terms of assembly, interacts with POLR2A via its hyperphosphorylated C-terminal domain (CTD). Interacts with CDK11A, CDK11B, CDK12 and CDK13. May form a ternary complex with CDK11B and casein kinase II (CKII). Interacts with pre-mRNA-splicing factors, including at least SRSF1, SRSF2 AND SRSF7/SLU7. Ubiquitous with higher level in liver; expressed in striatal neurons.

Its subcellular location is the nucleus speckle. It is found in the nucleus. The protein resides in the nucleoplasm. Involved in pre-mRNA splicing. Functions in association with cyclin-dependent kinases (CDKs). May play a role in the regulation of RNA polymerase II (pol II). Inhibited by the CDK-specific inhibitor CDKN1A/p21. The polypeptide is Cyclin-L1 (Ccnl1) (Rattus norvegicus (Rat)).